Reading from the N-terminus, the 378-residue chain is Succinyl-diaminopimelate desuccinylase (378 aa).

A Zn(2+)-binding site is contributed by H68. The active site involves D70. A Zn(2+)-binding site is contributed by D101. The active-site Proton acceptor is the E135. Positions 136, 164, and 350 each coordinate Zn(2+).

The protein belongs to the peptidase M20A family. DapE subfamily. Homodimer. It depends on Zn(2+) as a cofactor. Requires Co(2+) as cofactor.

It catalyses the reaction N-succinyl-(2S,6S)-2,6-diaminopimelate + H2O = (2S,6S)-2,6-diaminopimelate + succinate. The protein operates within amino-acid biosynthesis; L-lysine biosynthesis via DAP pathway; LL-2,6-diaminopimelate from (S)-tetrahydrodipicolinate (succinylase route): step 3/3. In terms of biological role, catalyzes the hydrolysis of N-succinyl-L,L-diaminopimelic acid (SDAP), forming succinate and LL-2,6-diaminopimelate (DAP), an intermediate involved in the bacterial biosynthesis of lysine and meso-diaminopimelic acid, an essential component of bacterial cell walls. This is Succinyl-diaminopimelate desuccinylase from Acinetobacter baumannii (strain ACICU).